Reading from the N-terminus, the 1113-residue chain is Myosin-binding protein 1 (1113 aa).

Residues 12–34 (LAFNEWLLMFMLFVNSIFSYVIA) form a helical membrane-spanning segment. Residues 209–229 (ESEAVFSDTEPKQESSLNHLP) form a disordered region. The region spanning 888-986 (SEGDRLKRQV…DLEAEIEYFR (99 aa)) is the GTD-binding domain.

Interacts with myosin XI-K, XI-I and XI-1. As to expression, expressed in leaf epidermal cells, roots and root hairs.

The protein resides in the endomembrane system. In terms of biological role, membrane-anchored myosin receptors that define a distinct, plant-specific transport vesicle compartment. This is Myosin-binding protein 1 from Arabidopsis thaliana (Mouse-ear cress).